The chain runs to 330 residues: Polyprenal reductase (330 aa).

Residues 1 to 19 are Cytoplasmic-facing; the sequence is MASWVGTELSALNPLRTLW. The chain crosses the membrane as a helical span at residues 20–40; it reads LALAAAFLLALLLQLAPAGLL. At 41–74 the chain is on the lumenal side; it reads PNCALFQDLIRYGKTKLSGPRRPAVCRAFDVPKR. The chain crosses the membrane as a helical span at residues 75–95; that stretch reads YFSHFYVVSVLWNGFLLWFLS. At 96–132 the chain is on the cytoplasmic side; sequence RSLFLGAPFPNWLRALLRTLGSTQFRALEMESKASQM. The chain crosses the membrane as a helical span at residues 133–153; that stretch reads LVGELALSAFLVLVFLWVHSV. The Lumenal segment spans residues 154 to 168; the sequence is RRLFECFYISVFSNA. Residues 169–189 traverse the membrane as a helical segment; sequence VMHVVQYCFGLVYYVLVGLTV. At 190–206 the chain is on the cytoplasmic side; sequence LSQVPMDDKNVYMLGKN. Residues 207–227 form a helical membrane-spanning segment; the sequence is LLLPARWFHVLGMMMFLWSSA. The Lumenal portion of the chain corresponds to 228-277; sequence HQYECHVILSNLRRNKKGAIVHCQHRIPFGDWFEYVSSANYLAELMIYIS. Residues 278–298 traverse the membrane as a helical segment; sequence MAVTFGFHNFTWWLVVAYVFF. At 299 to 330 the chain is on the cytoplasmic side; that stretch reads CQALSAFFNHKFYKSTFVSYPKHRKAFLPFLF.

It belongs to the steroid 5-alpha reductase family. Polyprenal reductase subfamily.

It is found in the endoplasmic reticulum membrane. The enzyme catalyses a di-trans,poly-cis-dolichal + NADP(+) = a di-trans,poly-cis-polyprenal + NADPH + H(+). It carries out the reaction a 3-oxo-5alpha-steroid + NADP(+) = a 3-oxo-Delta(4)-steroid + NADPH + H(+). The catalysed reaction is androst-4-ene-3,17-dione + NADPH + H(+) = 5alpha-androstan-3,17-dione + NADP(+). It catalyses the reaction 17beta-hydroxy-5alpha-androstan-3-one + NADP(+) = testosterone + NADPH + H(+). It functions in the pathway protein modification; protein glycosylation. Its function is as follows. Plays a key role in early steps of protein N-linked glycosylation by being involved in the conversion of polyprenol into dolichol. Acts as a polyprenal reductase that mediates the reduction of polyprenal into dolichal in a NADP-dependent mechanism. Dolichols are required for the synthesis of dolichol-linked monosaccharides and the oligosaccharide precursor used for N-glycosylation. Also able to convert testosterone (T) into 5-alpha-dihydrotestosterone (DHT). In Mesocricetus auratus (Golden hamster), this protein is Polyprenal reductase.